The following is a 65-amino-acid chain: Large ribosomal subunit protein bL35 (65 aa).

This sequence belongs to the bacterial ribosomal protein bL35 family.

This Pectobacterium atrosepticum (strain SCRI 1043 / ATCC BAA-672) (Erwinia carotovora subsp. atroseptica) protein is Large ribosomal subunit protein bL35.